A 158-amino-acid polypeptide reads, in one-letter code: Large ribosomal subunit protein uL15 (158 aa).

Residues 1 to 13 (MKLNEIKDNEGST) are compositionally biased toward basic and acidic residues. The interval 1-45 (MKLNEIKDNEGSTHSRKRLGRGIGSGSGKTGGRGVKGQKSRSGVA) is disordered. Residues 21-35 (RGIGSGSGKTGGRGV) are compositionally biased toward gly residues.

This sequence belongs to the universal ribosomal protein uL15 family. As to quaternary structure, part of the 50S ribosomal subunit.

In terms of biological role, binds to the 23S rRNA. The chain is Large ribosomal subunit protein uL15 from Rhizobium etli (strain CIAT 652).